A 313-amino-acid polypeptide reads, in one-letter code: MGNELRHRTVLLDEAVESLVTRPDGVYVDGTFGRGGHSRAVLARLASAGRLIAFDKDPRAIETAQGIEDARFSIVHDSFASMRDALAARGVEKVSGVLLDLGVSSPQVDDPARGFSFRADGPLDMRMDPTRGESAAEWLARASVQELTEVIRDYGEERFAFQIAKALVARRAESDRLGPLDTTGELAQIVGHVVKTREKGKDPATRTFQAIRIHVNQELADLQVVLDAALSLLEQGGRLVVISFHSLEDRIVKRFMQAHASAPAVDRRLPIRAVDLPSPPLKIISRQFPSEAEVAANPRARSAVMRIAERVTP.

S-adenosyl-L-methionine-binding positions include 35-37 (GGH), aspartate 55, phenylalanine 79, aspartate 100, and glutamine 107.

It belongs to the methyltransferase superfamily. RsmH family.

The protein resides in the cytoplasm. The catalysed reaction is cytidine(1402) in 16S rRNA + S-adenosyl-L-methionine = N(4)-methylcytidine(1402) in 16S rRNA + S-adenosyl-L-homocysteine + H(+). Functionally, specifically methylates the N4 position of cytidine in position 1402 (C1402) of 16S rRNA. This is Ribosomal RNA small subunit methyltransferase H from Burkholderia orbicola (strain MC0-3).